A 313-amino-acid polypeptide reads, in one-letter code: WD repeat-containing protein 82-A (313 aa).

WD repeat units follow at residues 19–58 (ENSDKINCFDFSPTGETVISSSDDDSIVLYDCQEGKPKRT), 105–144 (GHSKRVVALSMSPVDDTFISASLDKTIRLWDLRSPNCQGL), 146–184 (HLQGKPVCSFDPEGLIFAAGVNSEMVKLYDLRSFDKGPF), 192–231 (DRTCEWTSLKFSQDGKLILMSTNGGFLRLVDAFKGAVMHT), 236–276 (NNSK…KVAV), and 280–313 (KHTGPITCLQFNPKFMTFASACSNMAFWLPTIDD).

The protein belongs to the WD repeat SWD2 family. As to quaternary structure, component of the SET1/COMPASS complex. Component of the PNUTS-PP1 phosphatase complex.

Its subcellular location is the nucleus. The protein localises to the chromosome. It localises to the cytoplasm. Its function is as follows. Regulatory component of the SET1/COMPASS complex implicated in the tethering of this complex to transcriptional start sites of active genes. Facilitates histone H3 'Lys-4' methylation (H3K4me) via recruitment of the SETD1A or SETD1B to the 'Ser-5' phosphorylated C-terminal domain (CTD) of RNA polymerase II large subunit (POLR2A). Component of the PNUTS-PP1 protein phosphatase complex, a protein phosphatase 1 (PP1) complex that promotes RNA polymerase II transcription pause-release, allowing transcription elongation. This is WD repeat-containing protein 82-A (wdr82-a) from Xenopus laevis (African clawed frog).